The primary structure comprises 248 residues: Metallo-beta-lactamase type 2 (248 aa).

The signal sequence occupies residues 1–21 (MKGLKGLLVLALGFTGLQVFG). Zn(2+) is bound by residues histidine 97, histidine 99, aspartate 101, histidine 160, and cysteine 179. Substrate is bound at residue lysine 182. Residue histidine 221 coordinates Zn(2+).

This sequence belongs to the metallo-beta-lactamase superfamily. Class-B beta-lactamase family. As to quaternary structure, monomer. It depends on Zn(2+) as a cofactor.

The protein resides in the periplasm. It catalyses the reaction a beta-lactam + H2O = a substituted beta-amino acid. Functionally, confers resistance to the different beta-lactams antibiotics (penicillin, cephalosporin and carbapenem) via the hydrolysis of the beta-lactam ring. The protein is Metallo-beta-lactamase type 2 (blaB7) of Elizabethkingia meningoseptica (Chryseobacterium meningosepticum).